The primary structure comprises 340 residues: C5a anaphylatoxin chemotactic receptor 1 (340 aa).

Topologically, residues 1–30 (TPDYGHYDDKDTLDANTPVDKTSNTLRVPD) are extracellular. The tract at residues 3 to 11 (DYGHYDDKD) is required for CHIPS binding. A sulfotyrosine mark is found at Tyr4 and Tyr7. Residues 14–23 (DANTPVDKTS) form an involved in C5a binding region. Residues 31–57 (ILALVIFAVVFLVGVLRNALVVWVTAF) form a helical membrane-spanning segment. The Cytoplasmic portion of the chain corresponds to 58 to 62 (EAKRT). Residues 63–86 (INAIWFLNLAVADFLSCLALPILF) form a helical membrane-spanning segment. The Extracellular segment spans residues 87-103 (TSIVQHHHWPFGGAACR). A disulfide bridge connects residues Cys102 and Cys181. Residues 104–125 (ILPSLILLNMYASILLLATISA) form a helical membrane-spanning segment. Residues 126-146 (DRFLLVFNPIWCQNFRGAGLA) are Cytoplasmic-facing. The chain crosses the membrane as a helical span at residues 147-167 (WIACAVAWGLALLLTIPSFLY). Residues 168–193 (RVVREEYFPPKVLCGVDHGHDKRRER) are Extracellular-facing. A helical transmembrane segment spans residues 194–219 (AVAIARLVLGFVWPLLTLTMCYTFLL). The Cytoplasmic segment spans residues 220–235 (LRTWSRRATRSTKTLK). A helical membrane pass occupies residues 236-258 (VVVAVVASFFIFWLPYQVTGMMM). Topologically, residues 259–275 (SFLEPSSPTFLLLKKLD) are extracellular. Residues 276 to 296 (SLCISFAYINCCINPIIYVVA) traverse the membrane as a helical segment. The Cytoplasmic portion of the chain corresponds to 297–340 (GQGFQGRLRKSLPSLLRNVLTEESMVRESKSFTRSTVDTMAQKT). A phosphoserine mark is found at Ser307, Ser310, Ser320, Ser325, Ser327, and Ser331.

This sequence belongs to the G-protein coupled receptor 1 family. As to quaternary structure, homodimer. May also form higher-order oligomers. Interacts (when phosphorylated) with ARRB1 and ARRB2; the interaction is associated with internalization of C5aR. Interacts (via N-terminal domain) with S.aureus chemotaxis inhibitory protein (CHIPS); the interaction blocks the receptor and may thus inhibit the immune response. In terms of processing, sulfation plays a critical role in the association of C5aR with C5a, but no significant role in the ability of the receptor to transduce a signal and mobilize calcium in response to a small peptide agonist. Sulfation at Tyr-7 is important for CHIPS binding. Phosphorylated on serine residues in response to C5a binding, resulting in internalization of the receptor and short-term desensitization to C5a.

It is found in the cell membrane. Its subcellular location is the cytoplasmic vesicle. Functionally, receptor for the chemotactic and inflammatory peptide anaphylatoxin C5a. The ligand interacts with at least two sites on the receptor: a high-affinity site on the extracellular N-terminus, and a second site in the transmembrane region which activates downstream signaling events. Receptor activation stimulates chemotaxis, granule enzyme release, intracellular calcium release and superoxide anion production. The chain is C5a anaphylatoxin chemotactic receptor 1 (C5AR1) from Macaca mulatta (Rhesus macaque).